Consider the following 491-residue polypeptide: Anhydromuropeptide permease (491 aa).

Over 1-11 (MSSQYLRIFQQ) the chain is Cytoplasmic. A helical transmembrane segment spans residues 12-32 (PRSAILLILGFASGLPLALTS). Over 33-47 (GTLQAWMTVENIDLK) the chain is Periplasmic. Residues 48–61 (TIGFFSLVGQAYVF) traverse the membrane as a helical segment. The Cytoplasmic segment spans residues 62–81 (KFLWSPLMDRYTPPFFGRRR). The chain crosses the membrane as a helical span at residues 82–105 (GWLLATQILLLVAIAAMGFLEPGT). Q106 is a topological domain (periplasmic). The helical transmembrane segment at 107–124 (LRWMAALAVVIAFCSASQ) threads the bilayer. The Cytoplasmic portion of the chain corresponds to 125–221 (DIVFDAWKTD…VAPLRDFFGR (97 aa)). Residues 222 to 240 (NNAWLILLLIVLYKLGDAF) form a helical membrane-spanning segment. Residues 241 to 264 (AMSLTTTFLIRGVGFDAGEVGVVN) are Periplasmic-facing. Residues 265-284 (KTLGLLATIVGALYGGILMQ) traverse the membrane as a helical segment. Over 285–287 (RLS) the chain is Cytoplasmic. Residues 288–303 (LFRALLIFGILQGASN) form a helical membrane-spanning segment. The Periplasmic segment spans residues 304-327 (AGYWLLSITDKHLYSMGAAVFFEN). A helical membrane pass occupies residues 328–346 (LCGGMGTSAFVALLMTLCN). Residues 347 to 421 (KSFSATQFAL…NDNFISRTAY (75 aa)) lie on the Cytoplasmic side of the membrane. Residues 422 to 453 (PAGYAFAMWTLAAGVSLLAVWLLLLTMDALDL) form a helical membrane-spanning segment. The Periplasmic portion of the chain corresponds to 454–457 (THFS). A helical transmembrane segment spans residues 458 to 485 (FLPALLEVGVLVALSGVVLGGLLDYLAL). Topologically, residues 486–491 (RKTHLT) are cytoplasmic.

The protein belongs to the major facilitator superfamily.

It localises to the cell inner membrane. Permease involved in cell wall peptidoglycan recycling. Transports, from the periplasm into the cytoplasm, the disaccharide N-acetylglucosaminyl-beta-1,4-anhydro-N-acetylmuramic acid (GlcNAc-anhMurNAc) and GlcNAc-anhMurNAc-peptides. Transport is dependent on the proton motive force. This Escherichia coli O157:H7 protein is Anhydromuropeptide permease (ampG).